Consider the following 311-residue polypeptide: tRNA-cytidine(32) 2-sulfurtransferase (311 aa).

A PP-loop motif motif is present at residues 47-52; that stretch reads SGGKDS. 3 residues coordinate [4Fe-4S] cluster: cysteine 122, cysteine 125, and cysteine 213.

Belongs to the TtcA family. Homodimer. Mg(2+) is required as a cofactor. The cofactor is [4Fe-4S] cluster.

The protein localises to the cytoplasm. The catalysed reaction is cytidine(32) in tRNA + S-sulfanyl-L-cysteinyl-[cysteine desulfurase] + AH2 + ATP = 2-thiocytidine(32) in tRNA + L-cysteinyl-[cysteine desulfurase] + A + AMP + diphosphate + H(+). The protein operates within tRNA modification. Its function is as follows. Catalyzes the ATP-dependent 2-thiolation of cytidine in position 32 of tRNA, to form 2-thiocytidine (s(2)C32). The sulfur atoms are provided by the cysteine/cysteine desulfurase (IscS) system. The protein is tRNA-cytidine(32) 2-sulfurtransferase of Shigella dysenteriae serotype 1 (strain Sd197).